A 233-amino-acid polypeptide reads, in one-letter code: MSTHIGAKQNEIASTVLLPGDPLRAKFIAENFLEDVICYNDVRGMYGYTGTYKGKRVSVQGTGMGIPSISIYANELIESYGVKNLIRVGTCGSINKDIKVRDIILAMGACTNSGTNRMRFNGMDFAPIASFDLLKKAYDIGKSKGLDIKVGNILSSDLFYNDDKDAIKLWSKYGVLGIEMEASGLYTLGAKYGVNTLAILTVSDSIVTGEETTAKERETTFTKMMEIALELAE.

His4 is a binding site for a purine D-ribonucleoside. Phosphate contacts are provided by residues Gly20, Arg24, Arg43, and 87-90; that span reads RVGT. A purine D-ribonucleoside-binding positions include 179–181 and 203–204; these read EME and SD. Residue Asp204 is the Proton donor of the active site.

This sequence belongs to the PNP/UDP phosphorylase family. Homohexamer; trimer of homodimers.

It catalyses the reaction a purine D-ribonucleoside + phosphate = a purine nucleobase + alpha-D-ribose 1-phosphate. The enzyme catalyses a purine 2'-deoxy-D-ribonucleoside + phosphate = a purine nucleobase + 2-deoxy-alpha-D-ribose 1-phosphate. In terms of biological role, catalyzes the reversible phosphorolytic breakdown of the N-glycosidic bond in the beta-(deoxy)ribonucleoside molecules, with the formation of the corresponding free purine bases and pentose-1-phosphate. This chain is Purine nucleoside phosphorylase DeoD-type, found in Clostridium novyi (strain NT).